Here is a 231-residue protein sequence, read N- to C-terminus: GTP cyclohydrolase III (231 aa).

This sequence belongs to the archaeal-type GTP cyclohydrolase family.

It carries out the reaction GTP + 3 H2O = 2-amino-5-formylamino-6-(5-phospho-D-ribosylamino)pyrimidin-4(3H)-one + 2 phosphate + 2 H(+). In terms of biological role, catalyzes the formation of 2-amino-5-formylamino-6-ribofuranosylamino-4(3H)-pyrimidinone ribonucleotide monophosphate and inorganic phosphate from GTP. Also has an independent pyrophosphate phosphohydrolase activity. In Saccharolobus solfataricus (strain ATCC 35092 / DSM 1617 / JCM 11322 / P2) (Sulfolobus solfataricus), this protein is GTP cyclohydrolase III.